Consider the following 363-residue polypeptide: Outer membrane protein P2 (363 aa).

The N-terminal stretch at 1–20 (MKKTLAALIVGAFAASAANA) is a signal peptide.

The protein belongs to the Gram-negative porin family. Homotrimer.

Its subcellular location is the cell outer membrane. In terms of biological role, forms pores that allow passive diffusion of small molecules across the outer membrane. This chain is Outer membrane protein P2 (ompP2), found in Haemophilus influenzae.